Consider the following 118-residue polypeptide: Small ribosomal subunit protein uS13 (118 aa).

Residues 94–118 (GLPVRGQRTKTNARTRKGPRKPIKK) are disordered.

The protein belongs to the universal ribosomal protein uS13 family. In terms of assembly, part of the 30S ribosomal subunit. Forms a loose heterodimer with protein S19. Forms two bridges to the 50S subunit in the 70S ribosome.

In terms of biological role, located at the top of the head of the 30S subunit, it contacts several helices of the 16S rRNA. In the 70S ribosome it contacts the 23S rRNA (bridge B1a) and protein L5 of the 50S subunit (bridge B1b), connecting the 2 subunits; these bridges are implicated in subunit movement. Contacts the tRNAs in the A and P-sites. The chain is Small ribosomal subunit protein uS13 from Haemophilus ducreyi (strain 35000HP / ATCC 700724).